Here is a 671-residue protein sequence, read N- to C-terminus: tRNA(Met) cytidine acetyltransferase TmcA (671 aa).

ATP is bound by residues Gln-180, Gly-202–Gln-211, and Arg-319. The region spanning Gln-356 to Leu-531 is the N-acetyltransferase domain. Acetyl-CoA contacts are provided by residues Ile-461–Val-463, Gln-468–Arg-474, Glu-499, and Arg-506.

This sequence belongs to the RNA cytidine acetyltransferase family. TmcA subfamily.

The protein localises to the cytoplasm. The enzyme catalyses cytidine(34) in elongator tRNA(Met) + acetyl-CoA + ATP + H2O = N(4)-acetylcytidine(34) in elongator tRNA(Met) + ADP + phosphate + CoA + H(+). Its function is as follows. Catalyzes the formation of N(4)-acetylcytidine (ac(4)C) at the wobble position of tRNA(Met), by using acetyl-CoA as an acetyl donor and ATP (or GTP). The protein is tRNA(Met) cytidine acetyltransferase TmcA of Shigella flexneri serotype 5b (strain 8401).